The following is a 734-amino-acid chain: Diacylglycerol kinase alpha (734 aa).

2 EF-hand domains span residues 109-144 (RPED…MMRM) and 154-189 (ELRP…TVPL). Residues D122, D124, N126, E133, D167, D169, S171, S173, and E178 each contribute to the Ca(2+) site. 2 Phorbol-ester/DAG-type zinc fingers span residues 204 to 252 (QHMW…ALPC) and 268 to 318 (SHVW…GHEC). Residues 371–505 (SNTHPLLVFV…MDRWSVEVIP (135 aa)) form the DAGKc domain. Residue K483 is modified to N6-acetyllysine.

This sequence belongs to the eukaryotic diacylglycerol kinase family. In terms of assembly, monomer.

The protein resides in the cytoplasm. The protein localises to the cytosol. The catalysed reaction is a 1,2-diacyl-sn-glycerol + ATP = a 1,2-diacyl-sn-glycero-3-phosphate + ADP + H(+). It catalyses the reaction a 1-O-alkyl-sn-glycerol + ATP = a 1-O-alkyl-sn-glycero-3-phosphate + ADP + H(+). The enzyme catalyses 1-O-alkyl-2-acyl-sn-glycerol + ATP = 1-O-alkyl-2-acyl-sn-glycero-3-phosphate + ADP + H(+). It carries out the reaction 1,2-dihexadecanoyl-sn-glycerol + ATP = 1,2-dihexadecanoyl-sn-glycero-3-phosphate + ADP + H(+). The catalysed reaction is 1-hexadecanoyl-2-(9Z-octadecenoyl)-sn-glycerol + ATP = 1-hexadecanoyl-2-(9Z-octadecenoyl)-sn-glycero-3-phosphate + ADP + H(+). It catalyses the reaction 2-(9Z-octadecenoyl)-glycerol + ATP = 2-(9Z-octadecenoyl)-sn-glycero-3-phosphate + ADP + H(+). The enzyme catalyses 1,2-di-(9Z-octadecenoyl)-sn-glycerol + ATP = 1,2-di-(9Z-octadecenoyl)-sn-glycero-3-phosphate + ADP + H(+). It carries out the reaction 1-octadecanoyl-2-(5Z,8Z,11Z,14Z-eicosatetraenoyl)-sn-glycerol + ATP = 1-octadecanoyl-2-(5Z,8Z,11Z,14Z-eicosatetraenoyl)-sn-glycero-3-phosphate + ADP + H(+). The catalysed reaction is 1,2-didecanoyl-sn-glycerol + ATP = 1,2-didecanoyl-sn-glycero-3-phosphate + ADP + H(+). It catalyses the reaction 1-O-hexadecyl-2-acetyl-sn-glycerol + ATP = 1-O-hexadecyl-2-acetyl-sn-glycero-3-phosphate + ADP + H(+). The enzyme catalyses 1-O-hexadecyl-2-(5Z,8Z,11Z,14Z-eicosatetraenoyl)-sn-glycerol + ATP = 1-O-hexadecyl-2-(5Z,8Z,11Z,14Z-eicosatetraenoyl)-sn-glycero-3-phosphate + ADP + H(+). It carries out the reaction 1-O-hexadecyl-2-(9Z-octadecenoyl)-sn-glycerol + ATP = 1-O-hexadecyl-2-(9Z-octadecenoyl)-sn-glycero-3-phosphate + ADP + H(+). The catalysed reaction is 1-O-hexadecyl-sn-glycerol + ATP = 1-O-hexadecyl-sn-glycero-3-phosphate + ADP + H(+). It functions in the pathway lipid metabolism; glycerolipid metabolism. Stimulated by calcium and phosphatidylserine. Its function is as follows. Diacylglycerol kinase that converts diacylglycerol/DAG into phosphatidic acid/phosphatidate/PA and regulates the respective levels of these two bioactive lipids. Thereby, acts as a central switch between the signaling pathways activated by these second messengers with different cellular targets and opposite effects in numerous biological processes. Also plays an important role in the biosynthesis of complex lipids. Can also phosphorylate 1-alkyl-2-acylglycerol in vitro as efficiently as diacylglycerol provided it contains an arachidonoyl group. Also involved in the production of alkyl-lysophosphatidic acid, another bioactive lipid, through the phosphorylation of 1-alkyl-2-acetyl glycerol. The chain is Diacylglycerol kinase alpha (DGKA) from Bos taurus (Bovine).